A 271-amino-acid polypeptide reads, in one-letter code: MAKVPDMFEDLKNCYSENEEVSSSIDHLSLNQKSFYDVSYGPLHEGCMDQSVSLSISEISKTSKLTFKQSMVVVSTNGKVLKKRRLSLSQSITDNNLEAIANDSEEEIIKPRSAPFSFLSNMTYHFIRIIKHEFILNDTLNQTIIRANDQYLTAAAIHNLDEAVKFDMGAYTSSKDDTKVPVILRISKTQLYVSAQDEDQPVLLKEMPEIPKTITGSETNFLFFWETHGTKNYFISVAHPNLFIATKHDNWVCLAKGLPSITDFQILENQA.

The propeptide occupies 1 to 112 (MAKVPDMFED…DSEEEIIKPR (112 aa)). Residue Lys82 is modified to N6-acetyllysine. The tract at residues 82-86 (KKRRL) is nuclear localization signal (NLS). The residue at position 87 (Ser87) is a Phosphoserine. Asn102, Asn121, Asn137, and Asn141 each carry an N-linked (GlcNAc...) asparagine glycan.

It belongs to the IL-1 family. In terms of assembly, monomer. Interacts with TMED10; the interaction mediates the translocation from the cytoplasm into the ERGIC (endoplasmic reticulum-Golgi intermediate compartment) and thereby secretion. Interacts with IL1R1. Interacts with S100A13; this interaction is the first step in the export of IL1A, followed by direct translocation of this complex across the plasma membrane. Acetylated within its nuclear localization sequence, which impacts subcellular localization. Post-translationally, proteolytic processed by CAPN1 in a calcium-dependent manner. Cleavage from 31 kDa precursor to 18 kDa biologically active molecules. In terms of processing, phosphorylated. Phosphorylation greatly enhances susceptibility to digestion and promotes the conversion of pre-IL1A alpha to the biologically active IL1A.

It is found in the nucleus. The protein localises to the cytoplasm. Its subcellular location is the secreted. Functionally, cytokine constitutively present intracellularly in nearly all resting non-hematopoietic cells that plays an important role in inflammation and bridges the innate and adaptive immune systems. After binding to its receptor IL1R1 together with its accessory protein IL1RAP, forms the high affinity interleukin-1 receptor complex. Signaling involves the recruitment of adapter molecules such as MYD88, IRAK1 or IRAK4. In turn, mediates the activation of NF-kappa-B and the three MAPK pathways p38, p42/p44 and JNK pathways. Within the cell, acts as an alarmin and cell death results in its liberation in the extracellular space after disruption of the cell membrane to induce inflammation and alert the host to injury or damage. In addition to its role as a danger signal, which occurs when the cytokine is passively released by cell necrosis, directly senses DNA damage and acts as signal for genotoxic stress without loss of cell integrity. In Macaca fascicularis (Crab-eating macaque), this protein is Interleukin-1 alpha (IL1A).